The primary structure comprises 727 residues: Pentatricopeptide repeat-containing protein At4g20740 (727 aa).

The tract at residues 1–84 (MKSPKPPNLS…PSPPSHSTVI (84 aa)) is disordered. Polar residues predominate over residues 38–56 (SNRQSIPRVSPQPQSNSLA). Residues 59–70 (TPFDLRKWDPET) are compositionally biased toward basic and acidic residues. PPR repeat units follow at residues 157–191 (DFAAYNAFAYCLNRNGHFRAADQLPELMDSQGRPP), 192–226 (SEKQFEILIRMHADNRRGLRVYYVYEKMKKFGFKP), 227–261 (RVFLYNRIMDALVKNGYFDLALAVYEDFKEDGLVE), 262–296 (ESTTFMILVKGLCKAGRIEEMLEILQRMRENLCKP), 297–331 (DVFAYTAMIKTLVSEGNLDASLRVWDEMRRDEIKP), 332–366 (DVMAYGTLVVGLCKDGRVERGYELFMEMKGKQILI), 367–401 (DREIYRVLIEGFVADGKVRSACNLWEDLVDSGYIA), 402–436 (DIGIYNAVIKGLCSVNQVDKAYKLFQVAIEEELEP), 437–471 (DFETLSPIMVAYVVMNRLSDFSNVLERIGELGYPV), 506–540 (SVSVYNILMEALYKMGDIQKSLSLFYEMRKLGFEP), 541–575 (DSSSYSIAICCFVEKGDVKAACSFHEKIIEMSCVP), 576–606 (SIAAYLSLTKGLCQIGEIDAVMLLVRECLGN), 612–646 (MEFKYALTVCHVCKGSNAEKVMKVVDEMNQEGVFI), and 647–681 (NEVIYCAIISGMSKHGTIKVAREVFTELKKRKVMT).

It belongs to the PPR family. P subfamily.

The sequence is that of Pentatricopeptide repeat-containing protein At4g20740 from Arabidopsis thaliana (Mouse-ear cress).